The sequence spans 399 residues: Tryptophan synthase beta chain (399 aa).

K92 carries the N6-(pyridoxal phosphate)lysine modification.

Belongs to the TrpB family. As to quaternary structure, tetramer of two alpha and two beta chains. Requires pyridoxal 5'-phosphate as cofactor.

The enzyme catalyses (1S,2R)-1-C-(indol-3-yl)glycerol 3-phosphate + L-serine = D-glyceraldehyde 3-phosphate + L-tryptophan + H2O. It functions in the pathway amino-acid biosynthesis; L-tryptophan biosynthesis; L-tryptophan from chorismate: step 5/5. Functionally, the beta subunit is responsible for the synthesis of L-tryptophan from indole and L-serine. The sequence is that of Tryptophan synthase beta chain from Exiguobacterium sibiricum (strain DSM 17290 / CCUG 55495 / CIP 109462 / JCM 13490 / 255-15).